A 148-amino-acid chain; its full sequence is UPF0178 protein SH2212 (148 aa).

The protein belongs to the UPF0178 family.

This chain is UPF0178 protein SH2212, found in Staphylococcus haemolyticus (strain JCSC1435).